The primary structure comprises 400 residues: Beta-ketoadipyl-CoA thiolase (400 aa).

The active-site Acyl-thioester intermediate is C90. Active-site proton acceptor residues include H356 and C386.

It belongs to the thiolase-like superfamily. Thiolase family.

The enzyme catalyses succinyl-CoA + acetyl-CoA = 3-oxoadipyl-CoA + CoA. The protein operates within aromatic compound metabolism; beta-ketoadipate pathway; acetyl-CoA and succinyl-CoA from 3-oxoadipate: step 2/2. Its function is as follows. Catalyzes thiolytic cleavage of beta-ketoadipyl-CoA to succinyl-CoA and acetyl-CoA. The chain is Beta-ketoadipyl-CoA thiolase (pcaF) from Pseudomonas putida (Arthrobacter siderocapsulatus).